The following is a 505-amino-acid chain: L-carnitine/gamma-butyrobetaine antiporter (505 aa).

The next 12 membrane-spanning stretches (helical) occupy residues 10-30, 51-71, 92-112, 143-163, 195-215, 231-251, 263-283, 316-336, 347-367, 403-423, 446-466, and 475-495; these read IEPK…WLTV, WGWA…WLVF, IFMM…SIEI, GPLP…FFFV, FYLV…TPLV, LDAI…ACGL, SYLS…SFIM, WTVF…IFLA, LCFG…TVLG, LSTA…VTLI, LLVR…LLAL, and AIIA…LSFI.

It belongs to the BCCT transporter (TC 2.A.15) family. CaiT subfamily. In terms of assembly, homotrimer.

The protein localises to the cell inner membrane. It catalyses the reaction 4-(trimethylamino)butanoate(in) + (R)-carnitine(out) = 4-(trimethylamino)butanoate(out) + (R)-carnitine(in). Its pathway is amine and polyamine metabolism; carnitine metabolism. In terms of biological role, catalyzes the exchange of L-carnitine for gamma-butyrobetaine. The polypeptide is L-carnitine/gamma-butyrobetaine antiporter (Salmonella gallinarum (strain 287/91 / NCTC 13346)).